The chain runs to 689 residues: Protein SDA1 homolog (689 aa).

Disordered regions lie at residues 227–260 (DEKK…TKNK), 485–512 (EQEK…DGEW), and 623–689 (TDRK…RLMK). Residues 258-319 (KNKKKLDKAM…RFEVKLMHMD (62 aa)) are a coiled coil. Acidic residues predominate over residues 492 to 512 (PEEDDGWESASLSDDDEDGEW). Residues 670–681 (RDKQIALRDSLL) are compositionally biased toward basic and acidic residues.

Belongs to the SDA1 family.

The protein localises to the nucleus. It localises to the nucleolus. Its function is as follows. Required for 60S pre-ribosomal subunits export to the cytoplasm. The sequence is that of Protein SDA1 homolog (sdad1) from Xenopus laevis (African clawed frog).